The primary structure comprises 789 residues: Trimethylamine-oxide aldolase (789 aa).

It in the C-terminal section; belongs to the GcvT family.

The catalysed reaction is trimethylamine N-oxide + H(+) = dimethylamine + formaldehyde. Catalyzes the conversion of trimethylamine N-oxide (TMAO) to dimethylamine (DMA) and formaldehyde. This is Trimethylamine-oxide aldolase from Ruegeria pomeroyi (strain ATCC 700808 / DSM 15171 / DSS-3) (Silicibacter pomeroyi).